The sequence spans 180 residues: MPENKIRSTTILCVRKNGKVAIGGDGQVSMGNTVMKNTAKKIRRLYDGKILSGFAGSAADAFTLFELFEKKVQEFGGSLSRSAVELAREWRTDRMLRRLEALLIVADKEESFLISGTGDVISPDEGVIAIGSGGNYALAAARALYDHTNLSPKEIVESSMKIAADICIYTNNHITLEEIL.

The active site involves threonine 9. The Na(+) site is built by alanine 164, cysteine 167, and threonine 170.

The protein belongs to the peptidase T1B family. HslV subfamily. As to quaternary structure, a double ring-shaped homohexamer of HslV is capped on each side by a ring-shaped HslU homohexamer. The assembly of the HslU/HslV complex is dependent on binding of ATP.

It is found in the cytoplasm. It carries out the reaction ATP-dependent cleavage of peptide bonds with broad specificity.. Allosterically activated by HslU binding. Protease subunit of a proteasome-like degradation complex believed to be a general protein degrading machinery. The protein is ATP-dependent protease subunit HslV of Leptospira interrogans serogroup Icterohaemorrhagiae serovar Lai (strain 56601).